The primary structure comprises 380 residues: MKYELDKTDGHARRGRLKFERGVVETPAFMPVGTYGTVKGMTPEEVEATGAQILLGNTFHLWLRPGQEIMKLHGDLHDFMQWKGPILTDSGGFQVFSLGAMRKIKEEGVHFRNPINGEKIFLSPEKSMEIQYDLGSDIVMIFDECTPYPSDWDYAKNSMEMSLRWAKRSRQRFDELNNKNALFGIIQGGVYEDLRDISVKGLVEIGFDGYAVGGLAVGEPKEDMHRILEHVCPQIPADKPRYLMGVGKPEDLVEGVRRGIDMFDCVMPTRNARNGHLFVTNGVIKIRNAKHRSDTSTLDEHCDCYTCKNYSRAYLHHLDRCNEILGARLNTIHNLRYYQRLMAEIRQAIDESRFEDFVHEFYERIGKPVPPLNSSASKCD.

The active-site Proton acceptor is the D89. Substrate contacts are provided by residues 89–93, D143, Q187, and G214; that span reads DSGGF. The tract at residues 245 to 251 is RNA binding; it reads GVGKPED. Catalysis depends on D264, which acts as the Nucleophile. Positions 269-273 are RNA binding; important for wobble base 34 recognition; the sequence is TRNAR. Positions 302, 304, 307, and 333 each coordinate Zn(2+).

It belongs to the queuine tRNA-ribosyltransferase family. In terms of assembly, homodimer. Within each dimer, one monomer is responsible for RNA recognition and catalysis, while the other monomer binds to the replacement base PreQ1. Zn(2+) serves as cofactor.

It carries out the reaction 7-aminomethyl-7-carbaguanine + guanosine(34) in tRNA = 7-aminomethyl-7-carbaguanosine(34) in tRNA + guanine. The protein operates within tRNA modification; tRNA-queuosine biosynthesis. Its function is as follows. Catalyzes the base-exchange of a guanine (G) residue with the queuine precursor 7-aminomethyl-7-deazaguanine (PreQ1) at position 34 (anticodon wobble position) in tRNAs with GU(N) anticodons (tRNA-Asp, -Asn, -His and -Tyr). Catalysis occurs through a double-displacement mechanism. The nucleophile active site attacks the C1' of nucleotide 34 to detach the guanine base from the RNA, forming a covalent enzyme-RNA intermediate. The proton acceptor active site deprotonates the incoming PreQ1, allowing a nucleophilic attack on the C1' of the ribose to form the product. After dissociation, two additional enzymatic reactions on the tRNA convert PreQ1 to queuine (Q), resulting in the hypermodified nucleoside queuosine (7-(((4,5-cis-dihydroxy-2-cyclopenten-1-yl)amino)methyl)-7-deazaguanosine). This Proteus mirabilis (strain HI4320) protein is Queuine tRNA-ribosyltransferase.